Consider the following 323-residue polypeptide: Fructose-1,6-bisphosphatase class 1 (323 aa).

Mg(2+) is bound by residues Glu-88, Asp-107, Leu-109, and Asp-110. Substrate contacts are provided by residues 110–113 (DGSS) and Asn-200. A Mg(2+)-binding site is contributed by Glu-272.

Belongs to the FBPase class 1 family. Homotetramer. Mg(2+) serves as cofactor.

The protein localises to the cytoplasm. It catalyses the reaction beta-D-fructose 1,6-bisphosphate + H2O = beta-D-fructose 6-phosphate + phosphate. The protein operates within carbohydrate biosynthesis; gluconeogenesis. This is Fructose-1,6-bisphosphatase class 1 from Acinetobacter baumannii (strain AYE).